Consider the following 135-residue polypeptide: MSEFKRLMRLKLKMKQKRPEFKRQDWFKSSRIGTSWRRPFGKHSGMRIGLTHRAAVATVGYRGPALVRGLHPSGLQDILVNNVKELVAINPEIQGARIAATVGKRKRIEIVKKANELGIRVFNVSKQKQEEFLSL.

The protein belongs to the eukaryotic ribosomal protein eL32 family.

The polypeptide is Large ribosomal subunit protein eL32 (Methanococcus maripaludis (strain C6 / ATCC BAA-1332)).